The sequence spans 97 residues: UPF0213 protein BLi00048/BL00536 (97 aa).

The GIY-YIG domain occupies 4-79 (NSHYFYVLSC…KKLSRKNKER (76 aa)).

This sequence belongs to the UPF0213 family.

This Bacillus licheniformis (strain ATCC 14580 / DSM 13 / JCM 2505 / CCUG 7422 / NBRC 12200 / NCIMB 9375 / NCTC 10341 / NRRL NRS-1264 / Gibson 46) protein is UPF0213 protein BLi00048/BL00536.